The sequence spans 360 residues: Glycoprotein-N-acetylgalactosamine 3-beta-galactosyltransferase 1 (360 aa).

Topologically, residues 1-7 are cytoplasmic; sequence MSIICAK. The helical; Signal-anchor for type II membrane protein transmembrane segment at 8 to 28 threads the bilayer; that stretch reads VAWLPLTLGTAMGFLITFYLA. Topologically, residues 29–360 are lumenal; the sequence is RTLLERNSQP…SDFLEPPMES (332 aa). Residues Cys-79 and Cys-103 are joined by a disulfide bond. The UDP site is built by Met-82, Glu-126, Gly-127, Arg-128, and Lys-134. The N-linked (GlcNAc...) asparagine glycan is linked to Asn-148. Asp-157 contributes to the UDP binding site. Positions 157 and 159 each coordinate Mn(2+). Asn-173 carries an N-linked (GlcNAc...) asparagine glycan. Cys-220 and Cys-234 are joined by a disulfide. Residue Trp-274 participates in a glycoprotein binding. A disulfide bridge connects residues Cys-289 and Cys-290. 2 residues coordinate UDP: His-298 and Tyr-299. Residue His-298 coordinates Mn(2+). Asn-341 and Asn-347 each carry an N-linked (GlcNAc...) asparagine glycan.

The protein belongs to the glycosyltransferase 31 family. Beta3-Gal-T subfamily. In terms of assembly, homodimer; disulfide-linked. The cofactor is Mn(2+).

The protein localises to the membrane. It carries out the reaction an N-acetyl-alpha-D-galactosaminyl derivative + UDP-alpha-D-galactose = a beta-D-galactosyl-(1-&gt;3)-N-acetyl-alpha-D-galactosaminyl derivative + UDP + H(+). It participates in protein modification; protein glycosylation. Its function is as follows. Glycosyltransferase that generates the core 1 O-glycan Gal-beta1-3GalNAc-alpha1-Ser/Thr (T antigen), which is a precursor for many extended O-glycans in glycoproteins. In Xenopus laevis (African clawed frog), this protein is Glycoprotein-N-acetylgalactosamine 3-beta-galactosyltransferase 1 (c1galt1).